The following is a 348-amino-acid chain: tRNA N6-adenosine threonylcarbamoyltransferase (348 aa).

2 residues coordinate Fe cation: His-115 and His-119. Substrate is bound by residues Leu-138–Gly-142, Asp-171, Gly-184, and Asn-276. A Fe cation-binding site is contributed by Asp-304.

It belongs to the KAE1 / TsaD family. It depends on Fe(2+) as a cofactor.

Its subcellular location is the cytoplasm. It catalyses the reaction L-threonylcarbamoyladenylate + adenosine(37) in tRNA = N(6)-L-threonylcarbamoyladenosine(37) in tRNA + AMP + H(+). In terms of biological role, required for the formation of a threonylcarbamoyl group on adenosine at position 37 (t(6)A37) in tRNAs that read codons beginning with adenine. Is involved in the transfer of the threonylcarbamoyl moiety of threonylcarbamoyl-AMP (TC-AMP) to the N6 group of A37, together with TsaE and TsaB. TsaD likely plays a direct catalytic role in this reaction. The sequence is that of tRNA N6-adenosine threonylcarbamoyltransferase from Xylella fastidiosa (strain M23).